The chain runs to 597 residues: Elongation factor 4 (597 aa).

The region spanning 2–184 (DHIRNFSIIA…ALVAKVPPPK (183 aa)) is the tr-type G domain. GTP contacts are provided by residues 14–19 (DHGKST) and 131–134 (NKID).

The protein belongs to the TRAFAC class translation factor GTPase superfamily. Classic translation factor GTPase family. LepA subfamily.

The protein resides in the cell inner membrane. It carries out the reaction GTP + H2O = GDP + phosphate + H(+). Its function is as follows. Required for accurate and efficient protein synthesis under certain stress conditions. May act as a fidelity factor of the translation reaction, by catalyzing a one-codon backward translocation of tRNAs on improperly translocated ribosomes. Back-translocation proceeds from a post-translocation (POST) complex to a pre-translocation (PRE) complex, thus giving elongation factor G a second chance to translocate the tRNAs correctly. Binds to ribosomes in a GTP-dependent manner. The sequence is that of Elongation factor 4 from Paraburkholderia phytofirmans (strain DSM 17436 / LMG 22146 / PsJN) (Burkholderia phytofirmans).